The chain runs to 434 residues: MKKTHITEQKFADLGLEPQVLDGLNAKGFINCTPIQAKALPVLLAGQDIAGQAQTGTGKTLAFLAATFNHLLTTPAPEGRKITQPRAIIMAPTRELAIQIYNDAESLIASTGLKAALAYGGERYEKQQKVIEAGVDILIGTTGRIIDFYKQGQIDFKAIQVVVLDEADRMFDLGFIKDIRFVFRRMPAPAERLNMLFSATLSYRVQELAFEHMQEPEHVVVEPDQKTGHLITEELFYPSNDHKMALLQTLIEEEWPDRAIIFANTKHKCELVWGHLAADKHRVGLLTGDVPQKKRERILEEFTKGEVDILVATDVAARGLHIPQVTHVFNFDLPNEAEDYVHRIGRTGRAGESGNSISFACEEYAINLPAIEEYIEHSIPQSDYDTSALLEDLPAPIRLQRRPPQNRRNGSNNGQRQSGNRKHSRPRPPRSPQA.

Positions 9-37 (QKFADLGLEPQVLDGLNAKGFINCTPIQA) match the Q motif motif. The Helicase ATP-binding domain occupies 40-219 (LPVLLAGQDI…FEHMQEPEHV (180 aa)). 53-60 (AQTGTGKT) is a binding site for ATP. The DEAD box motif lies at 165–168 (DEAD). The Helicase C-terminal domain occupies 245–390 (ALLQTLIEEE…QSDYDTSALL (146 aa)). Positions 394-434 (PAPIRLQRRPPQNRRNGSNNGQRQSGNRKHSRPRPPRSPQA) are disordered. The span at 406–418 (NRRNGSNNGQRQS) shows a compositional bias: low complexity. The segment covering 419–428 (GNRKHSRPRP) has biased composition (basic residues).

The protein belongs to the DEAD box helicase family. RhlB subfamily. As to quaternary structure, component of the RNA degradosome, which is a multiprotein complex involved in RNA processing and mRNA degradation.

Its subcellular location is the cytoplasm. It catalyses the reaction ATP + H2O = ADP + phosphate + H(+). DEAD-box RNA helicase involved in RNA degradation. Has RNA-dependent ATPase activity and unwinds double-stranded RNA. The sequence is that of ATP-dependent RNA helicase RhlB from Aliivibrio salmonicida (strain LFI1238) (Vibrio salmonicida (strain LFI1238)).